Consider the following 922-residue polypeptide: Isoleucine--tRNA ligase (922 aa).

The 'HIGH' region signature appears at 57–67; the sequence is PYANGDIHLGH. Position 553 (glutamate 553) interacts with L-isoleucyl-5'-AMP. The 'KMSKS' region motif lies at 594–598; the sequence is KMSKS. Lysine 597 contributes to the ATP binding site. The Zn(2+) site is built by cysteine 892, cysteine 895, cysteine 912, and cysteine 915.

The protein belongs to the class-I aminoacyl-tRNA synthetase family. IleS type 1 subfamily. Monomer. Zn(2+) serves as cofactor.

It is found in the cytoplasm. It carries out the reaction tRNA(Ile) + L-isoleucine + ATP = L-isoleucyl-tRNA(Ile) + AMP + diphosphate. Catalyzes the attachment of isoleucine to tRNA(Ile). As IleRS can inadvertently accommodate and process structurally similar amino acids such as valine, to avoid such errors it has two additional distinct tRNA(Ile)-dependent editing activities. One activity is designated as 'pretransfer' editing and involves the hydrolysis of activated Val-AMP. The other activity is designated 'posttransfer' editing and involves deacylation of mischarged Val-tRNA(Ile). The polypeptide is Isoleucine--tRNA ligase (Desulfitobacterium hafniense (strain Y51)).